The sequence spans 144 residues: Large ribosomal subunit protein uL15 (144 aa).

The interval 1 to 53 is disordered; it reads MFLNTIKPGEGAKHAKRRVGRGIGSGLGKTAGRGHKGQKSRSGGFHKVGFEGG. Residues 21–31 are compositionally biased toward gly residues; it reads RGIGSGLGKTA.

Belongs to the universal ribosomal protein uL15 family. As to quaternary structure, part of the 50S ribosomal subunit.

Binds to the 23S rRNA. This chain is Large ribosomal subunit protein uL15, found in Laribacter hongkongensis (strain HLHK9).